Consider the following 1059-residue polypeptide: Dihydropyrimidine dehydrogenase [NADP(+)] (1059 aa).

The 4Fe-4S ferredoxin-type 1 domain occupies 84–118 (ERGALKEAMRCLKCADAPCQKSCPTQLDVKSFITS). 8 residues coordinate [4Fe-4S] cluster: Cys94, Cys97, Cys102, Cys106, Cys145, Cys151, Cys155, and Gln171. FAD contacts are provided by residues 207–211 (GCGPA), 231–239 (EKRAYIGGL), Arg248, and Leu274. Residues 354-357 (AGDT), 378-379 (RK), Arg385, 451-453 (AFG), and 495-501 (DVAGVAE) each bind NADP(+). 494-503 (GDVAGVAETT) lines the FAD pocket. Residues Ser564 and 588-589 (KT) contribute to the FMN site. Substrate-binding positions include Asn623 and 682–684 (NLS). Cys685 functions as the Proton acceptor in the catalytic mechanism. Lys723 provides a ligand contact to FMN. 750-751 (NT) is a binding site for substrate. FMN is bound by residues Gly781, 807–809 (TGG), and 830–831 (CS). 2 4Fe-4S ferredoxin-type domains span residues 955-987 (KVAI…FDPV) and 989-1019 (HQPH…MVPR). The [4Fe-4S] cluster site is built by Cys964, Cys967, Cys970, Cys974, Cys998, Cys1001, Cys1004, and Cys1008.

The protein belongs to the dihydropyrimidine dehydrogenase family. Requires [4Fe-4S] cluster as cofactor. FAD serves as cofactor. The cofactor is FMN.

The catalysed reaction is 5,6-dihydrouracil + NADP(+) = uracil + NADPH + H(+). It participates in amino-acid biosynthesis; beta-alanine biosynthesis. Involved in pyrimidine base degradation. Catalyzes the reduction of uracil and thymine. Involved in the degradation of the chemotherapeutic drug 5-fluorouracil. The polypeptide is Dihydropyrimidine dehydrogenase [NADP(+)] (dpyd-1) (Caenorhabditis elegans).